The following is a 218-amino-acid chain: uncharacterized protein (218 aa).

This is an uncharacterized protein from Mycoplasma genitalium (strain ATCC 33530 / DSM 19775 / NCTC 10195 / G37) (Mycoplasmoides genitalium).